Here is a 91-residue protein sequence, read N- to C-terminus: UPF0250 protein BB0170 (91 aa).

This sequence belongs to the UPF0250 family.

The protein is UPF0250 protein BB0170 of Bordetella bronchiseptica (strain ATCC BAA-588 / NCTC 13252 / RB50) (Alcaligenes bronchisepticus).